Consider the following 325-residue polypeptide: Glutarate 2-hydroxylase (325 aa).

3 residues coordinate Fe cation: histidine 160, aspartate 162, and histidine 292.

This sequence belongs to the glutarate hydroxylase family. Homotetramer. Fe(2+) is required as a cofactor.

It carries out the reaction glutarate + 2-oxoglutarate + O2 = (S)-2-hydroxyglutarate + succinate + CO2. The protein operates within amino-acid degradation. Functionally, acts as an alpha-ketoglutarate-dependent dioxygenase catalyzing hydroxylation of glutarate (GA) to L-2-hydroxyglutarate (L2HG). Functions in a L-lysine degradation pathway that proceeds via cadaverine, glutarate and L-2-hydroxyglutarate. This Citrobacter koseri (strain ATCC BAA-895 / CDC 4225-83 / SGSC4696) protein is Glutarate 2-hydroxylase.